The following is a 427-amino-acid chain: MQNSLDLKPISHVNGTVCLPGSKSISNRVLLLSSIAKGTTCLTNLLNSHDTQHMLNALKKLGVRYNLSDDKKTCHVQGIGGPFHLSEAISLYLGNAGTAIRPLLSVLSLHKNNILLNGDDRMHERPIGDLVDALIQGGAVIEYKKNKGYPPICTKGGFLGGSIFLNGNISSQFLTSLLISTPLALKDTTIFIKGNLVSKPYIDITLNLIKIFGVNIEHDSYNVFYIKGKQQYKTPGKYTIEGDASSASYFLAAAAIKGGSIKVTGVGKKSIQGDIEFANILEKMGATIFWEDYSITCTRNKLNAIDLDMNHIPDAAMTVAILALFSKGTTIIRNIYNWRVKETDRLSAMTIELRKIGAIVEEGRDFLSISPPIFFQYSSIETYNDHRMAMCFSLISLSGVGVNILNPNCISKTFPSYFKDFLSISKI.

3-phosphoshikimate-binding residues include Lys-23, Ser-24, and Arg-28. Lys-23 serves as a coordination point for phosphoenolpyruvate. Gly-97 and Arg-125 together coordinate phosphoenolpyruvate. The 3-phosphoshikimate site is built by Ser-170, Ser-171, Gln-172, Ser-198, Asp-314, Asn-337, and Lys-341. Gln-172 lines the phosphoenolpyruvate pocket. Asp-314 (proton acceptor) is an active-site residue. Phosphoenolpyruvate is bound by residues Arg-345, Arg-387, and Lys-412.

The protein belongs to the EPSP synthase family. Monomer.

It is found in the cytoplasm. The catalysed reaction is 3-phosphoshikimate + phosphoenolpyruvate = 5-O-(1-carboxyvinyl)-3-phosphoshikimate + phosphate. It participates in metabolic intermediate biosynthesis; chorismate biosynthesis; chorismate from D-erythrose 4-phosphate and phosphoenolpyruvate: step 6/7. Its function is as follows. Catalyzes the transfer of the enolpyruvyl moiety of phosphoenolpyruvate (PEP) to the 5-hydroxyl of shikimate-3-phosphate (S3P) to produce enolpyruvyl shikimate-3-phosphate and inorganic phosphate. This Buchnera aphidicola subsp. Acyrthosiphon pisum (strain 5A) protein is 3-phosphoshikimate 1-carboxyvinyltransferase.